Reading from the N-terminus, the 161-residue chain is Protein-export protein SecB (161 aa).

This sequence belongs to the SecB family. Homotetramer, a dimer of dimers. One homotetramer interacts with 1 SecA dimer.

The protein resides in the cytoplasm. Its function is as follows. One of the proteins required for the normal export of preproteins out of the cell cytoplasm. It is a molecular chaperone that binds to a subset of precursor proteins, maintaining them in a translocation-competent state. It also specifically binds to its receptor SecA. The protein is Protein-export protein SecB of Methylocella silvestris (strain DSM 15510 / CIP 108128 / LMG 27833 / NCIMB 13906 / BL2).